We begin with the raw amino-acid sequence, 677 residues long: Bargin (677 aa).

Low complexity-rich tracts occupy residues 1–13 (MDRG…TPAV) and 29–39 (APHAAAGPDGQ). 2 disordered regions span residues 1–39 (MDRG…PDGQ) and 168–190 (SQAT…HSHT). Residues 25-270 (EEAAAPHAAA…RENHGQADHS (246 aa)) form the BAR domain. 3 positions are modified to phosphoserine: Ser-183, Ser-270, and Ser-272. Positions 284–477 (VSLATHLQEL…ALIQSADTLF (194 aa)) constitute a Rho-GAP domain. A disordered region spans residues 504–577 (SEELPSTAVP…DMARRSTGSL (74 aa)). The segment covering 516–530 (ATTPAPAPAPAPAPA) has biased composition (pro residues). Phosphoserine is present on residues Ser-552 and Ser-558. The tract at residues 574–677 (TGSLAAAVET…IADLTEGLED (104 aa)) is mediates non-covalent binding of poly-ubiquitin chains.

As to expression, expressed in brain (at protein level).

The protein resides in the cell membrane. The protein localises to the cytoplasm. It is found in the cytosol. Functionally, GTPase activating protein (GAP) which specifically converts GTP-bound RAC1 and CDC42 in their inactive GDP-bound form. The GAP activity is enhanced by the non-covalent binding of K-29 and K-48 polyubiquitin chains. This chain is Bargin, found in Homo sapiens (Human).